Here is a 349-residue protein sequence, read N- to C-terminus: Anthranilate phosphoribosyltransferase (349 aa).

5-phospho-alpha-D-ribose 1-diphosphate is bound by residues Gly-82, 85–86, 92–95, 110–118, and Ser-122; these read GD, NVSS, and KHGNRAVSG. Anthranilate is bound at residue Gly-82. Mg(2+) is bound at residue Ser-94. Residue Asn-113 participates in anthranilate binding. An anthranilate-binding site is contributed by Arg-168. 2 residues coordinate Mg(2+): Asp-227 and Glu-228.

The protein belongs to the anthranilate phosphoribosyltransferase family. Homodimer. Mg(2+) serves as cofactor.

The enzyme catalyses N-(5-phospho-beta-D-ribosyl)anthranilate + diphosphate = 5-phospho-alpha-D-ribose 1-diphosphate + anthranilate. Its pathway is amino-acid biosynthesis; L-tryptophan biosynthesis; L-tryptophan from chorismate: step 2/5. Catalyzes the transfer of the phosphoribosyl group of 5-phosphorylribose-1-pyrophosphate (PRPP) to anthranilate to yield N-(5'-phosphoribosyl)-anthranilate (PRA). The protein is Anthranilate phosphoribosyltransferase of Pseudomonas paraeruginosa (strain DSM 24068 / PA7) (Pseudomonas aeruginosa (strain PA7)).